Reading from the N-terminus, the 301-residue chain is Glycine--tRNA ligase alpha subunit (301 aa).

Belongs to the class-II aminoacyl-tRNA synthetase family. In terms of assembly, tetramer of two alpha and two beta subunits.

The protein localises to the cytoplasm. The catalysed reaction is tRNA(Gly) + glycine + ATP = glycyl-tRNA(Gly) + AMP + diphosphate. The sequence is that of Glycine--tRNA ligase alpha subunit from Shewanella denitrificans (strain OS217 / ATCC BAA-1090 / DSM 15013).